The chain runs to 883 residues: Valine--tRNA ligase (883 aa).

The 'HIGH' region motif lies at 50–60 (PNVTGKLHMGH). The 'KMSKS' region motif lies at 527–531 (KMSKS). Lys530 is a binding site for ATP. A coiled-coil region spans residues 811 to 883 (LNELIDLDEE…KQRLEQLQRA (73 aa)). The segment at 859-883 (QRTKRSDFEDQLTSTKQRLEQLQRA) is disordered.

The protein belongs to the class-I aminoacyl-tRNA synthetase family. ValS type 1 subfamily. As to quaternary structure, monomer.

The protein localises to the cytoplasm. It carries out the reaction tRNA(Val) + L-valine + ATP = L-valyl-tRNA(Val) + AMP + diphosphate. In terms of biological role, catalyzes the attachment of valine to tRNA(Val). As ValRS can inadvertently accommodate and process structurally similar amino acids such as threonine, to avoid such errors, it has a 'posttransfer' editing activity that hydrolyzes mischarged Thr-tRNA(Val) in a tRNA-dependent manner. The protein is Valine--tRNA ligase of Lacticaseibacillus casei (Lactobacillus casei).